Consider the following 349-residue polypeptide: Histidinol-phosphate aminotransferase 1 (349 aa).

Residue lysine 213 is modified to N6-(pyridoxal phosphate)lysine.

The protein belongs to the class-II pyridoxal-phosphate-dependent aminotransferase family. Histidinol-phosphate aminotransferase subfamily. Homodimer. The cofactor is pyridoxal 5'-phosphate.

It carries out the reaction L-histidinol phosphate + 2-oxoglutarate = 3-(imidazol-4-yl)-2-oxopropyl phosphate + L-glutamate. It participates in amino-acid biosynthesis; L-histidine biosynthesis; L-histidine from 5-phospho-alpha-D-ribose 1-diphosphate: step 7/9. The sequence is that of Histidinol-phosphate aminotransferase 1 from Carboxydothermus hydrogenoformans (strain ATCC BAA-161 / DSM 6008 / Z-2901).